Here is a 558-residue protein sequence, read N- to C-terminus: Glucose-6-phosphate isomerase (558 aa).

Ala2 carries the post-translational modification N-acetylalanine. The residue at position 12 (Lys12) is an N6-acetyllysine. Lys34 carries the post-translational modification N6-(2-hydroxyisobutyryl)lysine. Ser107 is modified (phosphoserine). A Phosphothreonine modification is found at Thr109. Lys142 is modified (N6-acetyllysine). 159–160 (GS) contributes to the D-glucose 6-phosphate binding site. Residue Ser185 is modified to Phosphoserine; by CK2. 210 to 215 (SKTFTT) is a D-glucose 6-phosphate binding site. Thr250 is modified (phosphothreonine). 3 residues coordinate D-glucose 6-phosphate: Gln354, Glu358, and His389. The active-site Proton donor is the Glu358. His389 is a catalytic residue. An N6-acetyllysine; alternate modification is found at Lys454. Lys454 carries the N6-malonyllysine; alternate modification. At Lys454 the chain carries N6-succinyllysine; alternate. Ser455 carries the post-translational modification Phosphoserine. Lys519 contributes to the D-glucose 6-phosphate binding site. Lys519 is a catalytic residue.

This sequence belongs to the GPI family. Homodimer; in the catalytically active form. Monomer in the secreted form. In terms of processing, phosphorylation at Ser-185 by CK2 has been shown to decrease enzymatic activity and may contribute to secretion by a non-classical secretory pathway. ISGylated.

It is found in the cytoplasm. Its subcellular location is the secreted. It carries out the reaction alpha-D-glucose 6-phosphate = beta-D-fructose 6-phosphate. It participates in carbohydrate degradation; glycolysis; D-glyceraldehyde 3-phosphate and glycerone phosphate from D-glucose: step 2/4. In the cytoplasm, catalyzes the conversion of glucose-6-phosphate to fructose-6-phosphate, the second step in glycolysis, and the reverse reaction during gluconeogenesis. Besides it's role as a glycolytic enzyme, also acts as a secreted cytokine: acts as an angiogenic factor (AMF) that stimulates endothelial cell motility. Acts as a neurotrophic factor, neuroleukin, for spinal and sensory neurons. It is secreted by lectin-stimulated T-cells and induces immunoglobulin secretion. The polypeptide is Glucose-6-phosphate isomerase (Pongo abelii (Sumatran orangutan)).